The following is a 50-amino-acid chain: Sperm protamine P1 (50 aa).

The protein belongs to the protamine P1 family. As to quaternary structure, cross-linked by interchain disulfide bonds around the DNA-helix. Testis.

It is found in the nucleus. The protein localises to the chromosome. Its function is as follows. Protamines substitute for histones in the chromatin of sperm during the haploid phase of spermatogenesis. They compact sperm DNA into a highly condensed, stable and inactive complex. This is Sperm protamine P1 (PRM1) from Saguinus imperator (Emperor tamarin).